Consider the following 78-residue polypeptide: UPF0335 protein A1E_00570 (78 aa).

It belongs to the UPF0335 family.

The polypeptide is UPF0335 protein A1E_00570 (Rickettsia canadensis (strain McKiel)).